Here is a 216-residue protein sequence, read N- to C-terminus: MPIGPPPPEKMMFQLSLRRRGISDQAVLRAMDEVPRDAFVEPGQRAEAWLDTALPIACGQTISQPFVVAYMTEQMQLRPEHRVLEIGTGSGYQAAILSRLSRAVLTLERFKTLADQARARLAALHCDNVEVRIGDGFAVPADAGLFDRIIVTAAMEEVPASLLDRLDLDGVLIAPVGPHNATQTLLRIRKSKSGIERKELVAVRFVPALPGLAREL.

The active site involves Ser63.

This sequence belongs to the methyltransferase superfamily. L-isoaspartyl/D-aspartyl protein methyltransferase family.

It localises to the cytoplasm. The catalysed reaction is [protein]-L-isoaspartate + S-adenosyl-L-methionine = [protein]-L-isoaspartate alpha-methyl ester + S-adenosyl-L-homocysteine. In terms of biological role, catalyzes the methyl esterification of L-isoaspartyl residues in peptides and proteins that result from spontaneous decomposition of normal L-aspartyl and L-asparaginyl residues. It plays a role in the repair and/or degradation of damaged proteins. The protein is Protein-L-isoaspartate O-methyltransferase of Rhodopseudomonas palustris (strain BisB18).